The chain runs to 346 residues: Histidinol-phosphate aminotransferase (346 aa).

At Lys-206 the chain carries N6-(pyridoxal phosphate)lysine.

This sequence belongs to the class-II pyridoxal-phosphate-dependent aminotransferase family. Histidinol-phosphate aminotransferase subfamily. In terms of assembly, homodimer. Requires pyridoxal 5'-phosphate as cofactor.

It carries out the reaction L-histidinol phosphate + 2-oxoglutarate = 3-(imidazol-4-yl)-2-oxopropyl phosphate + L-glutamate. It participates in amino-acid biosynthesis; L-histidine biosynthesis; L-histidine from 5-phospho-alpha-D-ribose 1-diphosphate: step 7/9. This chain is Histidinol-phosphate aminotransferase, found in Bacteroides thetaiotaomicron (strain ATCC 29148 / DSM 2079 / JCM 5827 / CCUG 10774 / NCTC 10582 / VPI-5482 / E50).